A 243-amino-acid polypeptide reads, in one-letter code: Carboxy-S-adenosyl-L-methionine synthase (243 aa).

Residues Y40, 65-67 (GCS), 90-91 (DN), 118-119 (DI), N133, and R200 each bind S-adenosyl-L-methionine.

Belongs to the class I-like SAM-binding methyltransferase superfamily. Cx-SAM synthase family. Homodimer.

The enzyme catalyses prephenate + S-adenosyl-L-methionine = carboxy-S-adenosyl-L-methionine + 3-phenylpyruvate + H2O. Catalyzes the conversion of S-adenosyl-L-methionine (SAM) to carboxy-S-adenosyl-L-methionine (Cx-SAM). This is Carboxy-S-adenosyl-L-methionine synthase from Shewanella loihica (strain ATCC BAA-1088 / PV-4).